The primary structure comprises 397 residues: Leucine carboxyl methyltransferase 1 (397 aa).

A disordered region spans residues 17–61; the sequence is AIQTPPPTDPNAAPAHRPAPRPALGRCRPPHRRRRRLRPPVRPPL. Low complexity predominate over residues 26–43; sequence PNAAPAHRPAPRPALGRC. Residues 44–55 are compositionally biased toward basic residues; that stretch reads RPPHRRRRRLRP. S-adenosyl-L-methionine-binding positions include R119, G142, D168, 224-225, and E259; that span reads DL.

Belongs to the methyltransferase superfamily. LCMT family.

The catalysed reaction is [phosphatase 2A protein]-C-terminal L-leucine + S-adenosyl-L-methionine = [phosphatase 2A protein]-C-terminal L-leucine methyl ester + S-adenosyl-L-homocysteine. Functionally, methylates the carboxyl group of the C-terminal leucine residue of protein phosphatase 2A catalytic subunits to form alpha-leucine ester residues. The polypeptide is Leucine carboxyl methyltransferase 1 (PPM1) (Cryptococcus neoformans var. neoformans serotype D (strain B-3501A) (Filobasidiella neoformans)).